The primary structure comprises 337 residues: MKTTIYDVAKAAGVSITTVSRVINNTGRISDKTRQKVMNVMNEMAYTPNVHAAALTGKRTNMIALVAPDISNPFYGELAKSIEERADELGFQMLICSTDYDPKKETKYFSVLKQKKVDGIIFATGIESHDSMSALEEIASEQIPIAMISQDKPLLPMDIVVIDDVRGGYEAAKHLLSLGHTNIACIIGDGSTTGEKNRIKGFRQAMEEAGVPIDESLIIQTRFSLESGKEEAGKLLDRNAPTAIFAFNDVLACAAIQAARIRGIKVPDDLSIIGFDNTILAEMAAPPLTTVAQPIKEMGAERHRTAGRSNRGKRKAKQKIVLPPELVVRHSTSPLNT.

Residues 1–57 (MKTTIYDVAKAAGVSITTVSRVINNTGRISDKTRQKVMNVMNEMAYTPNVHAAALTG) form the HTH lacI-type domain. The H-T-H motif DNA-binding region spans 5-24 (IYDVAKAAGVSITTVSRVIN). The disordered stretch occupies residues 300–319 (AERHRTAGRSNRGKRKAKQK).

Functionally, involved in the control of degradation of B.subtilis amidophosphoribosyltransferase (purF). Probably activates the gene for a degradative protease. This chain is HTH-type transcriptional regulator DegA (degA), found in Bacillus subtilis (strain 168).